The sequence spans 158 residues: Large ribosomal subunit protein mL50 (158 aa).

It belongs to the mitochondrion-specific ribosomal protein mL50 family. As to quaternary structure, component of the mitochondrial large ribosomal subunit (mt-LSU). Mature mammalian 55S mitochondrial ribosomes consist of a small (28S) and a large (39S) subunit. The 28S small subunit contains a 12S ribosomal RNA (12S mt-rRNA) and 30 different proteins. The 39S large subunit contains a 16S rRNA (16S mt-rRNA), a copy of mitochondrial valine transfer RNA (mt-tRNA(Val)), which plays an integral structural role, and 52 different proteins.

It localises to the mitochondrion. In Homo sapiens (Human), this protein is Large ribosomal subunit protein mL50 (MRPL50).